The primary structure comprises 212 residues: Thymidylate kinase (212 aa).

10-17 (GPEGAGKT) is an ATP binding site.

The protein belongs to the thymidylate kinase family.

The catalysed reaction is dTMP + ATP = dTDP + ADP. Functionally, phosphorylation of dTMP to form dTDP in both de novo and salvage pathways of dTTP synthesis. This chain is Thymidylate kinase, found in Bacillus licheniformis (strain ATCC 14580 / DSM 13 / JCM 2505 / CCUG 7422 / NBRC 12200 / NCIMB 9375 / NCTC 10341 / NRRL NRS-1264 / Gibson 46).